Reading from the N-terminus, the 416-residue chain is Tryptophan synthase beta chain (416 aa).

An N6-(pyridoxal phosphate)lysine modification is found at Lys-109.

Belongs to the TrpB family. In terms of assembly, tetramer of two alpha and two beta chains. Pyridoxal 5'-phosphate is required as a cofactor.

The enzyme catalyses (1S,2R)-1-C-(indol-3-yl)glycerol 3-phosphate + L-serine = D-glyceraldehyde 3-phosphate + L-tryptophan + H2O. It functions in the pathway amino-acid biosynthesis; L-tryptophan biosynthesis; L-tryptophan from chorismate: step 5/5. Its function is as follows. The beta subunit is responsible for the synthesis of L-tryptophan from indole and L-serine. The sequence is that of Tryptophan synthase beta chain from Prochlorococcus marinus (strain SARG / CCMP1375 / SS120).